The following is a 193-amino-acid chain: dCTP deaminase (193 aa).

DCTP contacts are provided by residues 110–115, D128, 136–138, Y171, K178, and Q182; these read RSSLAR and VLE. E138 acts as the Proton donor/acceptor in catalysis. Residues 169–193 are disordered; the sequence is RPYNRRQDAKYRDQQGAVASRIDKD.

The protein belongs to the dCTP deaminase family. In terms of assembly, homotrimer.

The catalysed reaction is dCTP + H2O + H(+) = dUTP + NH4(+). Its pathway is pyrimidine metabolism; dUMP biosynthesis; dUMP from dCTP (dUTP route): step 1/2. Catalyzes the deamination of dCTP to dUTP. The sequence is that of dCTP deaminase from Citrobacter koseri (strain ATCC BAA-895 / CDC 4225-83 / SGSC4696).